The primary structure comprises 310 residues: Aspartate carbamoyltransferase catalytic subunit (310 aa).

Arg-57 and Thr-58 together coordinate carbamoyl phosphate. Lys-86 serves as a coordination point for L-aspartate. Carbamoyl phosphate contacts are provided by Arg-107, His-135, and Gln-138. 2 residues coordinate L-aspartate: Arg-168 and Arg-229. Carbamoyl phosphate is bound by residues Leu-268 and Pro-269.

This sequence belongs to the aspartate/ornithine carbamoyltransferase superfamily. ATCase family. Heterooligomer of catalytic and regulatory chains.

It carries out the reaction carbamoyl phosphate + L-aspartate = N-carbamoyl-L-aspartate + phosphate + H(+). Its pathway is pyrimidine metabolism; UMP biosynthesis via de novo pathway; (S)-dihydroorotate from bicarbonate: step 2/3. Functionally, catalyzes the condensation of carbamoyl phosphate and aspartate to form carbamoyl aspartate and inorganic phosphate, the committed step in the de novo pyrimidine nucleotide biosynthesis pathway. The protein is Aspartate carbamoyltransferase catalytic subunit of Thermococcus onnurineus (strain NA1).